We begin with the raw amino-acid sequence, 1503 residues long: DNA-directed RNA polymerase subunit beta' (1503 aa).

The Zn(2+) site is built by C60, C62, C75, and C78. The Mg(2+) site is built by D626, D628, and D630. 4 residues coordinate Zn(2+): C1002, C1075, C1082, and C1085. The segment at 1439-1503 (EESQQAEEAP…EEEDNDLPAF (65 aa)) is disordered. Positions 1486 to 1503 (GDNDQSDAEEEDNDLPAF) are enriched in acidic residues.

This sequence belongs to the RNA polymerase beta' chain family. As to quaternary structure, the RNAP catalytic core consists of 2 alpha, 1 beta, 1 beta' and 1 omega subunit. When a sigma factor is associated with the core the holoenzyme is formed, which can initiate transcription. Mg(2+) is required as a cofactor. Requires Zn(2+) as cofactor.

It carries out the reaction RNA(n) + a ribonucleoside 5'-triphosphate = RNA(n+1) + diphosphate. DNA-dependent RNA polymerase catalyzes the transcription of DNA into RNA using the four ribonucleoside triphosphates as substrates. The polypeptide is DNA-directed RNA polymerase subunit beta' (Chloroflexus aurantiacus (strain ATCC 29364 / DSM 637 / Y-400-fl)).